The following is a 400-amino-acid chain: Acyl-CoA dehydrogenase FadE26 (400 aa).

Residues 127-130, threonine 136, and serine 162 each bind FAD; that span reads IGYS. Residue glutamate 247 is the Proton acceptor of the active site. 380-382 contacts FAD; that stretch reads TNE.

Belongs to the acyl-CoA dehydrogenase family. In terms of assembly, heterotetramer (dimer of heterodimers) composed of FadE26 and FadE27. FAD is required as a cofactor.

It catalyses the reaction (25S)-3-oxocholest-4-en-26-oyl-CoA + A = 3-oxo-cholest-4,24-dien-26-oyl-CoA + AH2. It participates in steroid metabolism; cholesterol degradation. With respect to regulation, uncompetitively inhibited by high concentration of 3-OCS-CoA. In terms of biological role, involved in the first cycle of side chain dehydrogenation in the beta-oxidation of cholesterol catabolism. It contributes partly to the virulence by increasing the efficiency of beta-oxidation. Catalyzes the dehydrogenation of acyl-CoA ester side chains of (25S)-3-oxo-cholest-4-en-26-oyl-CoA (3-OCS-CoA) to yield (24E)-3-oxo-cholest-4,24-dien-26-oyl-CoA. Also able to dehydrogenate steroyl-CoA such as 3-oxo-chol-4-en-24-oyl-CoA (3-OCO-CoA) as well as 3-oxo-4-pregnene-20-carboxyl-CoA (3-OPC-CoA). It dehydrogenates only (25S)-OCS-CoA diastereomer. The protein is Acyl-CoA dehydrogenase FadE26 (fadE26) of Mycobacterium tuberculosis (strain ATCC 25618 / H37Rv).